Here is a 694-residue protein sequence, read N- to C-terminus: Elongation factor G (694 aa).

The tr-type G domain maps to 6–288 (KLYRNIGIAA…GVIEYLPSPT (283 aa)). GTP contacts are provided by residues 15-22 (AHVDAGKT), 86-90 (DTPGH), and 140-143 (NKMD).

This sequence belongs to the TRAFAC class translation factor GTPase superfamily. Classic translation factor GTPase family. EF-G/EF-2 subfamily.

It localises to the cytoplasm. In terms of biological role, catalyzes the GTP-dependent ribosomal translocation step during translation elongation. During this step, the ribosome changes from the pre-translocational (PRE) to the post-translocational (POST) state as the newly formed A-site-bound peptidyl-tRNA and P-site-bound deacylated tRNA move to the P and E sites, respectively. Catalyzes the coordinated movement of the two tRNA molecules, the mRNA and conformational changes in the ribosome. This Legionella pneumophila (strain Lens) protein is Elongation factor G.